The primary structure comprises 90 residues: Putative beta-neurotoxin RjAa14F (90 aa).

A signal peptide spans 1–18; it reads MKILIFIIASFMLIGVEC. The LCN-type CS-alpha/beta domain maps to 19–89; that stretch reads KEGYPTNSEG…VWDPNNNKCV (71 aa). Intrachain disulfides connect Cys-29/Cys-88, Cys-33/Cys-62, Cys-40/Cys-69, and Cys-44/Cys-71.

The protein belongs to the long (4 C-C) scorpion toxin superfamily. Sodium channel inhibitor family. Beta subfamily. In terms of tissue distribution, expressed by the venom gland.

The protein resides in the secreted. Functionally, beta toxins bind voltage-independently at site-4 of sodium channels (Nav) and shift the voltage of activation toward more negative potentials thereby affecting sodium channel activation and promoting spontaneous and repetitive firing. The chain is Putative beta-neurotoxin RjAa14F from Rhopalurus junceus (Caribbean blue scorpion).